Reading from the N-terminus, the 74-residue chain is Omega-conotoxin-like protein 1 (74 aa).

The signal sequence occupies residues 1–20 (MSKFILLVCILLLTTNIVSA). Cystine bridges form between Cys24–Cys38, Cys31–Cys43, and Cys37–Cys50.

As to expression, highly expressed in brain. Is also found in hemolymph.

The impact of this protein on the neuronal activity of the honeybee brain is not known. It does not affect apparent movement or hatching of blowfly larvae. However, when injected into fish, it induces a strong reversible paralytic effect. In addition, the presence of this small peptide in the hemolymph of adult drones together with its induction after bacterial infection suggests that this peptide exhibits antibacterial activity. This peptide may act by inhibiting ion channels. This is Omega-conotoxin-like protein 1 from Apis mellifera (Honeybee).